Reading from the N-terminus, the 1616-residue chain is MAYTQTATSSALLETIRGNNTLVNDLAKRRLYDTAVDEFNARDRRPKVNFSKVVSEEQTLIATKAYPEFQITFYNTQNAVHSLAGGLRSLELEYLMMQIPYGSLTYDIGGNFASHLFKGRAYVHCCMPNLDVRDIMRHEGQKDSIELYLSRLERGNKHVPNFQKEAFDRYAEMPNEVVCHDTFQTCGHSQECYTGRVYAIALHSIYDIPADEFGAALLRKNVHVCYAAFHFSENLLLEDSHVNLDEINACFQRDGDRLTFSFASESTLNYSHSYSNILKYVCKTYFPASNREVYMKEFLVTRVNTWFCKFSRIDTFLLYKGVAHKGVDSEQFYKAMEDAWHYKKTLAMCNSERILLEDSSSVNYWFPKMRDMVIVPLFDISLETSKRTRKEVLVLKDFVYTVLNHIRTYQAKALTYSNVLSFVESIRSRVIINGVTARSEWDVDKSLLQSLSMTFFLHIKLAVLKDDLLISKFALGPKTVSQHVWDEISLAFGNAFPSIKERLINRKLIKITENALEIRVPDLYVTFHDRLVSEYKMSVDMPVLDIRKKMEETEEMYNALSELSVLKNSDKFDVDVFSQMCQSLEVDPMTAAKVIVAVMSNESGLTLTFEQPTEANVALALQDSEKASDGALVVTSRDVEEPSIKGSMARGELQLAGLSGDVPESSYTRSEEIESLEQFHMATASSLIHKQMCSIVYTGPLKVQQMKNFIDSLVASLSAAVSNLVKILKDTAAIDLETRQKFGVLDVASKRWLVKPSAKNHAWGVVETHARKYHVALLEHDEFGIITCDNWRRVAVSPESVVYSDMAKLRTLRRLLKDGEPHVSSAKVVLVDGVPGCGKTKEILSRVNFEEDLILVPGRQAAEMIRRRANASGIIVATKDNVRTVDSFLMNYGKGARCQFKRLFIDEGLMLHTGCVNFLVEMSLSDIAYVYGDTQQIPYINRVTGFPYPAHFAKLEVDEVETRRTTLRCPADVTHFLNQRYEGHVMCTSSEKKSVSQEMVSGAASINPVSKPLKGKILTFTQSDKEALLSRGYTDVHTVHEVQGETYADVSLVRLTPTPVSIIARDSPHVLVSLSRHTKSLKYYTVVMDPLVSIIRDLERVSSYLLDMYKVDAGTQXQLQVDSVFKNFNLFVATPKTGDISDMQFYYDKCLPGNSTLLNNYDAVTMKLTDISLNVKDCILDMSKSVAAPKDAKPTLIPMVRTAAEMPRQTGLLENLVAMIKRNFNSPELSGVVDIENTASLVVDKFFDSYLLKEKRKPNKNFSLFSRESLNRWIAKQEQVTIGQLADFDFVDLPAVDQYRHMIKAQPKQKLDLSIQTEYPALQTIVYHSKKINAIFGPLFSELTRQLLDSIDSSRFLFFTRKTPAQIEDFFGDLDSHVPMDVLELDVSKYDKSQNEFHCAVEYEIWRRLGLEDFLAEVWKQGHRKTTLKDYTAGIKTCLWYQRKSGDVTTFIGNTVIIASCLASMLPMEKLIKGAFCGDDSLLYFPKGCEYPDIQQAANLMWNFEAKLFKKQYGYFCGRYVIHHDRGCIVYYDPLKLISKLGAKHIKDWDHLEEFRRSLCNVAESLNNCAYYTQLDDAVGEVHKTAPPGSFVYKSLVKYLSDKVLFRSLFLDGSSC.

A methyltransferase region spans residues 50–441 (FSKVVSEEQT…INGVTARSEW (392 aa)). In terms of domain architecture, Alphavirus-like MT spans 72–281 (TFYNTQNAVH…HSYSNILKYV (210 aa)). A (+)RNA virus helicase ATP-binding domain is found at 801–963 (VVYSDMAKLR…KLEVDEVETR (163 aa)). The tract at residues 830 to 1085 (LVDGVPGCGK…RHTKSLKYYT (256 aa)) is helicase. 833 to 840 (GVPGCGKT) is a binding site for ATP. Positions 964-1116 (RTTLRCPADV…DMYKVDAGTQ (153 aa)) constitute a (+)RNA virus helicase C-terminal domain. The RdRp catalytic domain maps to 1380 to 1493 (MDVLELDVSK…YFPKGCEYPD (114 aa)).

It belongs to the ssRNA positive-strand viruses RNA-directed RNA polymerase family. As to quaternary structure, heterodimer of a large and a small subunit.

It carries out the reaction RNA(n) + a ribonucleoside 5'-triphosphate = RNA(n+1) + diphosphate. It catalyses the reaction ATP + H2O = ADP + phosphate + H(+). Its function is as follows. Is an RNA-dependent RNA polymerase active in viral RNA replication. Is a methyltransferase active in RNA capping and an RNA helicase. Methyltransferase displays a cytoplasmic capping enzyme activity. This function is necessary since all viral RNAs are synthesized in the cytoplasm, and host capping enzymes are restricted to the nucleus. Helicase region probably exhibits NTPase and RNA unwinding activities (Potential). It also acts as a suppressor of RNA-mediated gene silencing, also known as post-transcriptional gene silencing (PTGS), a mechanism of plant viral defense that limits the accumulation of viral RNAs. May mediate silencing suppression through either inhibition of HEN1-mediated siRNA or siRNA demethylation. The polypeptide is Replicase large subunit (Antirrhinum majus (Garden snapdragon)).